Here is a 372-residue protein sequence, read N- to C-terminus: N-methyl-L-tryptophan oxidase (372 aa).

An FAD-binding site is contributed by 4-34 (DLIIIGSGSVGAAAGYYATRAGLNVLMTDAH). S-8alpha-FAD cysteine is present on Cys308.

Belongs to the MSOX/MTOX family. MTOX subfamily. In terms of assembly, monomer. Requires FAD as cofactor.

It catalyses the reaction N(alpha)-methyl-L-tryptophan + O2 + H2O = L-tryptophan + formaldehyde + H2O2. Catalyzes the oxidative demethylation of N-methyl-L-tryptophan. This is N-methyl-L-tryptophan oxidase from Escherichia coli O1:K1 / APEC.